The following is a 72-amino-acid chain: Translation initiation factor IF-1 (72 aa).

The S1-like domain maps to 1–72; sequence MAKEDNIEMQ…SKGRIVFRSR (72 aa).

The protein belongs to the IF-1 family. In terms of assembly, component of the 30S ribosomal translation pre-initiation complex which assembles on the 30S ribosome in the order IF-2 and IF-3, IF-1 and N-formylmethionyl-tRNA(fMet); mRNA recruitment can occur at any time during PIC assembly.

Its subcellular location is the cytoplasm. One of the essential components for the initiation of protein synthesis. Stabilizes the binding of IF-2 and IF-3 on the 30S subunit to which N-formylmethionyl-tRNA(fMet) subsequently binds. Helps modulate mRNA selection, yielding the 30S pre-initiation complex (PIC). Upon addition of the 50S ribosomal subunit IF-1, IF-2 and IF-3 are released leaving the mature 70S translation initiation complex. The chain is Translation initiation factor IF-1 from Shewanella loihica (strain ATCC BAA-1088 / PV-4).